The chain runs to 115 residues: Skin calcitonin gene-related peptide (115 aa).

An N-terminal signal peptide occupies residues 1 to 25 (MVLLKISSLLAVLGLLVCQMYSSQA). Residues 26 to 69 (APARRALEPLPDRVTEAHRLLRALIRELTAEDMEASSSGAAHKR) constitute a propeptide, removed in mature form by a carboxypeptidase. C71 and C76 form a disulfide bridge. F106 carries the phenylalanine amide modification. Residues 107–115 (GRRRRSLHV) constitute a propeptide, removed in mature form by an endoprotease.

Skin, intestine and brain.

It localises to the secreted. CGRP induces vasodilation. It dilates a variety of vessels including the coronary, cerebral and systemic vasculature. Its abundance in the CNS also points toward a neurotransmitter or neuromodulator role. In Phyllomedusa bicolor (Two-colored leaf frog), this protein is Skin calcitonin gene-related peptide.